A 144-amino-acid polypeptide reads, in one-letter code: Actin-associated protein FAM107A (144 aa).

The stretch at 70–90 forms a coiled coil; that stretch reads VLEHRRRNQLIKKKEEELEAK. Residues 74 to 84 carry the Nuclear localization signal motif; it reads RRRNQLIKKKE. The interval 104 to 123 is disordered; it reads QQRLNQLENPPQRDEDHAPE. Residues 114 to 123 show a composition bias toward basic and acidic residues; that stretch reads PQRDEDHAPE.

In terms of assembly, interacts with ACTB. Interacts with F-actin. Interacts with PRDX1. Interacts with COMMD1; this interaction stabilizes COMMD1 in the nucleus. Interacts with MAP1A. Expressed in septum, the neocortex, the CA3 region of the hippocampus and the cerebellum (at protein level).

The protein localises to the nucleus. It localises to the cytoplasm. It is found in the cytoskeleton. The protein resides in the stress fiber. Its subcellular location is the cell junction. The protein localises to the focal adhesion. It localises to the cell projection. It is found in the ruffle membrane. The protein resides in the synapse. In terms of biological role, stress-inducible actin-binding protein that plays a role in synaptic and cognitive functions by modulating actin filamentous (F-actin) dynamics. Mediates polymerization of globular actin to F-actin. Also binds to, stabilizes and bundles F-actin. Involved in synaptic function by regulating neurite outgrowth in an actin-dependent manner and for the acquisition of hippocampus-dependent cognitive function, such as learning and long-term memory. Plays a role in the actin and microtubule cytoskeleton organization; negatively regulates focal adhesion (FA) assembly promoting malignant glial cell migration in an actin-, microtubule- and MAP1A-dependent manner. Also involved in neuroblastoma G1/S phase cell cycle progression and cell proliferation inhibition by stimulating ubiquitination of NF-kappa-B subunit RELA and NF-kappa-B degradation in a COMMD1- and actin-dependent manner. May play a role in tumor development. This chain is Actin-associated protein FAM107A, found in Mus musculus (Mouse).